A 401-amino-acid chain; its full sequence is MTQDVSPIITSLLDTDAYKLHMQQAVYHRYRNVSVAAEFRCRGDELLGEYAGEIANQVNLMGQLALTQDEYDYLAALPFFQRDYLDWLRTLRLDPRRVAISNDRGRLNIRISGPWREVILWEVPLLAVISEVVHRHRSPHITPEVAAAQLQRRLSEFRHLSADVDLRGFHLIDFGTRRRFSRAVHQAILTTLKSEFPYLSGTSNYLFAKQMALTPLGTQAHEWFQAHQQICPVLANSQRAALQSWLDEYPDQLGIALTDCITMDAFLRDFGSQFAGHYQGLRHDSGDPIAWGEKAIAHYEQLGLDPQDKMLVFSDNLDLPKALALYRHFHHRINLSFGIGTRLTCDLPGVRPLNIVIKLVECNGKPVAKLSDSPGKTICQDAAFVKALRKAFDLPLVKRAS.

At His-221 the chain carries Phosphohistidine; by autocatalysis.

It belongs to the NAPRTase family. Post-translationally, transiently phosphorylated on a His residue during the reaction cycle. Phosphorylation strongly increases the affinity for substrates and increases the rate of nicotinate D-ribonucleotide production. Dephosphorylation regenerates the low-affinity form of the enzyme, leading to product release.

It catalyses the reaction nicotinate + 5-phospho-alpha-D-ribose 1-diphosphate + ATP + H2O = nicotinate beta-D-ribonucleotide + ADP + phosphate + diphosphate. Its pathway is cofactor biosynthesis; NAD(+) biosynthesis; nicotinate D-ribonucleotide from nicotinate: step 1/1. Functionally, catalyzes the synthesis of beta-nicotinate D-ribonucleotide from nicotinate and 5-phospho-D-ribose 1-phosphate at the expense of ATP. The polypeptide is Nicotinate phosphoribosyltransferase (Edwardsiella ictaluri (strain 93-146)).